Reading from the N-terminus, the 114-residue chain is MPRSVNSVAKRARRKKIMKQAKGFFGRRKNVWTVAKNAVEKAMSYAYRDRKQNKRNFRSLWIQRINAGARLEGMSYSQFMGKVKANGIELNRKVLADLAMNHPEAFKAILNKVK.

This sequence belongs to the bacterial ribosomal protein bL20 family.

Binds directly to 23S ribosomal RNA and is necessary for the in vitro assembly process of the 50S ribosomal subunit. It is not involved in the protein synthesizing functions of that subunit. This chain is Large ribosomal subunit protein bL20, found in Flavobacterium johnsoniae (strain ATCC 17061 / DSM 2064 / JCM 8514 / BCRC 14874 / CCUG 350202 / NBRC 14942 / NCIMB 11054 / UW101) (Cytophaga johnsonae).